The chain runs to 154 residues: MSTSLAVVRLDPDLPLPSRAHDGDAGVDLYSAQDVELGPGERALVPTGVAVAIPHGMVGLIHPRSGLAARVGLSIVNTPGTVDAGYRGEIKVCLINLDTSTPITIGRGDRIAQLLVQRVELPELVEVTSFDEAGLADTTRGDGGYGSSGGHASL.

Substrate is bound by residues 64-66 (RSG), asparagine 77, 81-83 (TVD), and lysine 91.

It belongs to the dUTPase family. Homotrimer. Mg(2+) is required as a cofactor.

The catalysed reaction is dUTP + H2O = dUMP + diphosphate + H(+). It participates in pyrimidine metabolism; dUMP biosynthesis; dUMP from dCTP (dUTP route): step 2/2. Its function is as follows. This enzyme is involved in nucleotide metabolism: it produces dUMP, the immediate precursor of thymidine nucleotides and it decreases the intracellular concentration of dUTP so that uracil cannot be incorporated into DNA. The sequence is that of Deoxyuridine 5'-triphosphate nucleotidohydrolase from Mycolicibacterium gilvum (strain PYR-GCK) (Mycobacterium gilvum (strain PYR-GCK)).